The primary structure comprises 68 residues: UPF0352 protein CPS_2611 (68 aa).

It belongs to the UPF0352 family.

The polypeptide is UPF0352 protein CPS_2611 (Colwellia psychrerythraea (strain 34H / ATCC BAA-681) (Vibrio psychroerythus)).